The chain runs to 674 residues: Electrogenic aspartate/glutamate antiporter SLC25A13, mitochondrial (674 aa).

Alanine 2 bears the N-acetylalanine mark. The regulatory N-terminal domain stretch occupies residues 2–295 (AAAKVALTKR…TLADIERIAP (294 aa)). Over 2 to 331 (AAAKVALTKR…LLQVAESAYR (330 aa)) the chain is Mitochondrial intermembrane. EF-hand domains follow at residues 51–86 (SQPN…SVLC), 87–122 (APDA…TTIH), 123–157 (QHIP…FLLE), and 158–193 (IQLE…IRPH). Ca(2+) is bound by residues aspartate 66, threonine 68, aspartate 70, leucine 72, and glutamate 77. The linker loop domain stretch occupies residues 296–311 (LEEGTLPFNLAEAQRQ). The tract at residues 321-611 (VLLQVAESAY…LQRWFYIDFG (291 aa)) is carrier domain. Solcar repeat units follow at residues 326–418 (AESA…VRDK), 426–510 (VPLA…ARAS), and 518–605 (VSPG…LQRW). Residues 332-349 (FGLGSVAGAVGATAVYPI) form a helical membrane-spanning segment. Topologically, residues 350-392 (DLVKTRMQNQRSTGSFVGELMYKNSFDCFKKVLRYEGFFGLYR) are mitochondrial matrix. 2 positions are modified to N6-acetyllysine: lysine 353 and lysine 372. A helical membrane pass occupies residues 393–412 (GLLPQLLGVAPEKAIKLTVN). The Mitochondrial intermembrane segment spans residues 413–435 (DFVRDKFMHKDGSVPLAAEILAG). Residues 436–449 (GCAGGSQVIFTNPL) traverse the membrane as a helical segment. At 450–484 (EIVKIRLQVAGEITTGPRVSALSVVRDLGFFGIYK) the chain is on the mitochondrial matrix side. Residue lysine 453 is modified to N6-methyllysine. Lysine 484 carries the N6-acetyllysine; alternate modification. Lysine 484 carries the post-translational modification N6-succinyllysine; alternate. The helical transmembrane segment at 485-504 (GAKACFLRDIPFSAIYFPCY) threads the bilayer. The Mitochondrial intermembrane segment spans residues 505 to 523 (AHARASFANEDGQVSPGSL). The chain crosses the membrane as a helical span at residues 524-541 (LLAGAIAGMPAASLVTPA). Topologically, residues 542 to 580 (DVIKTRLQVAARAGQTTYSGVIDCFKKILREEGPKALWK) are mitochondrial matrix. An N6-succinyllysine modification is found at lysine 580. Residues 581-599 (GAARVFRSSPQFGVTLLTY) traverse the membrane as a helical segment. Topologically, residues 600–674 (ELLQRWFYID…PTSEAIGGGP (75 aa)) are mitochondrial intermembrane. Residues 612-674 (GVKPMGSEPV…PTSEAIGGGP (63 aa)) form a C-terminal domain region. Position 661 is an N6-acetyllysine (lysine 661).

Belongs to the mitochondrial carrier (TC 2.A.29) family. As to quaternary structure, homodimer (via N-terminus).

Its subcellular location is the mitochondrion inner membrane. The enzyme catalyses L-aspartate(in) + L-glutamate(out) + H(+)(out) = L-aspartate(out) + L-glutamate(in) + H(+)(in). It carries out the reaction 3-sulfino-L-alanine(out) + L-glutamate(in) + H(+)(in) = 3-sulfino-L-alanine(in) + L-glutamate(out) + H(+)(out). The catalysed reaction is 3-sulfino-L-alanine(out) + L-aspartate(in) = 3-sulfino-L-alanine(in) + L-aspartate(out). In terms of biological role, mitochondrial electrogenic aspartate/glutamate antiporter that favors efflux of aspartate and entry of glutamate and proton within the mitochondria as part of the malate-aspartate shuttle. Also mediates the uptake of L-cysteinesulfinate (3-sulfino-L-alanine) by mitochondria in exchange of L-glutamate and proton. Can also exchange L-cysteinesulfinate with aspartate in their anionic form without any proton translocation. Lacks transport activity towards gamma-aminobutyric acid (GABA). This is Electrogenic aspartate/glutamate antiporter SLC25A13, mitochondrial from Macaca fascicularis (Crab-eating macaque).